The sequence spans 307 residues: Acyl transferase (307 aa).

Catalysis depends on charge relay system residues Ser-116, Asp-213, and His-243.

Belongs to the LuxD family.

The protein operates within lipid metabolism; fatty acid reduction for biolumincescence. Its function is as follows. Acyl transferase is part of the fatty acid reductase system required for aldehyde biosynthesis; it produces fatty acids for the luminescent reaction. The sequence is that of Acyl transferase from Photorhabdus luminescens (Xenorhabdus luminescens).